The sequence spans 148 residues: UPF0260 protein PM0539 (148 aa).

Belongs to the UPF0260 family.

This chain is UPF0260 protein PM0539, found in Pasteurella multocida (strain Pm70).